The chain runs to 310 residues: Protein DOS2 (310 aa).

Basic and acidic residues-rich tracts occupy residues 15–26 and 135–146; these read DKISNSHTKETG and SNDKDENSKENE. Disordered stretches follow at residues 15–45 and 131–151; these read DKIS…KTNE and AEND…AVGG. Residues 176 to 228 form the BSD domain; it reads QLDPFDVDEKTEEICSILQGDKDISKLMNDIVPHKISYKDFWHIYFLQRNKIL. Residues 240–310 form a disordered region; sequence KKEKETEEKE…KDDDDDDDWE (71 aa). Residues 247 to 263 show a composition bias toward acidic residues; the sequence is EKEVEWDDEEEEEDDDK. 2 stretches are compositionally biased toward basic and acidic residues: residues 264 to 276 and 284 to 300; these read VEAV…KGET and GLKD…KDES. A compositionally biased stretch (acidic residues) spans 301-310; it reads KDDDDDDDWE.

Functionally, acts in ubiquitin metabolism and is necessary for the control of single-copy DNA replication. This chain is Protein DOS2 (DOS2), found in Saccharomyces cerevisiae (strain ATCC 204508 / S288c) (Baker's yeast).